Consider the following 332-residue polypeptide: Formamidase (332 aa).

The region spanning 14 to 259 is the CN hydrolase domain; it reads FLAALIQYPV…WEIVTAEVYP (246 aa). The Proton acceptor role is filled by glutamate 60. The Proton donor role is filled by lysine 132. The Nucleophile role is filled by cysteine 165.

It belongs to the carbon-nitrogen hydrolase superfamily. Aliphatic amidase family.

The enzyme catalyses formamide + H2O = formate + NH4(+). Is an aliphatic amidase with a restricted substrate specificity, as it only hydrolyzes formamide. In Bacillus cereus (strain Q1), this protein is Formamidase.